The following is a 103-amino-acid chain: UPF0145 protein Dred_2155 (103 aa).

This sequence belongs to the UPF0145 family.

In Desulforamulus reducens (strain ATCC BAA-1160 / DSM 100696 / MI-1) (Desulfotomaculum reducens), this protein is UPF0145 protein Dred_2155.